Consider the following 392-residue polypeptide: Succinate--CoA ligase [ADP-forming] subunit beta (392 aa).

Residues 9-236 (KELFAAHGVP…PSAADPLEAK (228 aa)) enclose the ATP-grasp domain. Residues K45, 52–54 (GRG), V94, and E99 each bind ATP. Positions 191 and 205 each coordinate Mg(2+). Substrate is bound by residues N256 and 318–320 (GIT).

Belongs to the succinate/malate CoA ligase beta subunit family. As to quaternary structure, heterotetramer of two alpha and two beta subunits. Mg(2+) serves as cofactor.

The catalysed reaction is succinate + ATP + CoA = succinyl-CoA + ADP + phosphate. The enzyme catalyses GTP + succinate + CoA = succinyl-CoA + GDP + phosphate. The protein operates within carbohydrate metabolism; tricarboxylic acid cycle; succinate from succinyl-CoA (ligase route): step 1/1. Succinyl-CoA synthetase functions in the citric acid cycle (TCA), coupling the hydrolysis of succinyl-CoA to the synthesis of either ATP or GTP and thus represents the only step of substrate-level phosphorylation in the TCA. The beta subunit provides nucleotide specificity of the enzyme and binds the substrate succinate, while the binding sites for coenzyme A and phosphate are found in the alpha subunit. The chain is Succinate--CoA ligase [ADP-forming] subunit beta from Acidothermus cellulolyticus (strain ATCC 43068 / DSM 8971 / 11B).